The sequence spans 267 residues: Methyl-coenzyme M reductase II subunit gamma (267 aa).

Arginine 123 contributes to the coenzyme M binding site.

It belongs to the methyl-coenzyme M reductase gamma subunit family. In terms of assembly, MCR is a hexamer of two alpha, two beta, and two gamma chains, forming a dimer of heterotrimers. It depends on coenzyme F430 as a cofactor.

The enzyme catalyses coenzyme B + methyl-coenzyme M = methane + coenzyme M-coenzyme B heterodisulfide. It functions in the pathway one-carbon metabolism; methyl-coenzyme M reduction; methane from methyl-coenzyme M: step 1/1. Functionally, component of the methyl-coenzyme M reductase (MCR) I that catalyzes the reductive cleavage of methyl-coenzyme M (CoM-S-CH3 or 2-(methylthio)ethanesulfonate) using coenzyme B (CoB or 7-mercaptoheptanoylthreonine phosphate) as reductant which results in the production of methane and the mixed heterodisulfide of CoB and CoM (CoM-S-S-CoB). This is the final step in methanogenesis. The sequence is that of Methyl-coenzyme M reductase II subunit gamma (mrtG) from Methanothermus fervidus (strain ATCC 43054 / DSM 2088 / JCM 10308 / V24 S).